A 320-amino-acid chain; its full sequence is Cytochrome f (320 aa).

Positions 1-36 (MKLNSLINLIQKSIYSCTLLLTILNIICIAPNSSNA) are cleaved as a signal peptide. Heme-binding residues include Phe37, Cys57, Cys60, and His61. A helical membrane pass occupies residues 286–305 (IKGMIAFFFVSVLAQIFFVL).

It belongs to the cytochrome f family. As to quaternary structure, the 4 large subunits of the cytochrome b6-f complex are cytochrome b6, subunit IV (17 kDa polypeptide, petD), cytochrome f and the Rieske protein, while the 4 small subunits are PetG, PetL, PetM and PetN. The complex functions as a dimer. The cofactor is heme.

Its subcellular location is the plastid. It localises to the chloroplast thylakoid membrane. Component of the cytochrome b6-f complex, which mediates electron transfer between photosystem II (PSII) and photosystem I (PSI), cyclic electron flow around PSI, and state transitions. The sequence is that of Cytochrome f (petA) from Porphyra purpurea (Red seaweed).